The sequence spans 221 residues: Glutathione S-transferase Z1 (221 aa).

The region spanning 7 to 88 is the GST N-terminal domain; the sequence is EKLKLYSYWR…YLDEKYPEPP (82 aa). Glutathione is bound by residues 17–18, 17–22, Gln-46, 46–47, 59–60, Val-60, 72–73, Gln-112, and 116–118; these read SS, SSCAHR, QF, TV, DS, and NLA. The 126-residue stretch at 93 to 218 folds into the GST C-terminal domain; the sequence is DLHKRAVNYQ…LPEKQPDAPS (126 aa).

Belongs to the GST superfamily. Zeta family. In terms of assembly, homodimer.

Its subcellular location is the cytoplasm. It is found in the cytosol. It carries out the reaction RX + glutathione = an S-substituted glutathione + a halide anion + H(+). Functionally, acts a maleylacetone isomerase. Also catalyzes the glutathione-dependent dehalogenation of dichloroacetic acid to glyoxylic acid. In vitro, possesses glutathione peroxidase activity toward cumene hydroperoxide and linoleic acid-13-hydroperoxide. The polypeptide is Glutathione S-transferase Z1 (GSTZ1) (Arabidopsis thaliana (Mouse-ear cress)).